The primary structure comprises 141 residues: Large ribosomal subunit protein uL16 (141 aa).

Belongs to the universal ribosomal protein uL16 family. Part of the 50S ribosomal subunit.

Binds 23S rRNA and is also seen to make contacts with the A and possibly P site tRNAs. The chain is Large ribosomal subunit protein uL16 from Sulfurimonas denitrificans (strain ATCC 33889 / DSM 1251) (Thiomicrospira denitrificans (strain ATCC 33889 / DSM 1251)).